We begin with the raw amino-acid sequence, 136 residues long: Putative pre-16S rRNA nuclease (136 aa).

It belongs to the YqgF nuclease family.

The protein resides in the cytoplasm. Its function is as follows. Could be a nuclease involved in processing of the 5'-end of pre-16S rRNA. This is Putative pre-16S rRNA nuclease from Francisella tularensis subsp. mediasiatica (strain FSC147).